The primary structure comprises 301 residues: HTH-type transcriptional regulator MtrA (301 aa).

The 102-residue stretch at 196-297 (KRLGHLIQKV…HVSPGQYRKE (102 aa)) folds into the HTH araC/xylS-type domain. 2 DNA-binding regions (H-T-H motif) span residues 216 to 237 (DKMVAAANMSRAQLMRRFKSQV) and 264 to 287 (VLEVALSVGFQSETHFGKAFKRQY).

Its activity is regulated as follows. The affinity for the mtrCDE promoter increases 2-fold in the presence of TX-100, a known effector and substrate of the MtrCDE pump. Its function is as follows. Involved in the induction of the mtrCDE-encoded efflux pump. Binds specifically to the mtrCDE promoter region. Required for high-level inducible resistance to the detergent Triton X-100 (TX-100) and the spermicide nonoxynol-9 (N-9). This Neisseria gonorrhoeae protein is HTH-type transcriptional regulator MtrA.